The primary structure comprises 179 residues: Interleukin-22 (179 aa).

An N-terminal signal peptide occupies residues Met-1–Ala-33. 2 cysteine pairs are disulfide-bonded: Cys-40–Cys-132 and Cys-89–Cys-178. N-linked (GlcNAc...) asparagine glycans are attached at residues Asn-54, Asn-68, and Asn-97.

Belongs to the IL-10 family.

Its subcellular location is the secreted. Functionally, cytokine that plays a critical role in modulating tissue responses during inflammation. Plays an essential role in the regeneration of epithelial cells to maintain barrier function after injury and for the prevention of further tissue damage. Unlike most of the cytokines, has no effect on immune cells. Signals through a heterodimeric receptor composed of two subunits, the specific receptor IL22RA1 which is present on non-immune cells in many organs and the shared subunit IL10RB. Ligation of IL22RA1 with IL22 induces activation of the tyrosine kinases JAK1 and TYK2, which in turn activates STAT3. In turn, promotes cell survival and proliferation through STAT3, ERK1/2 and PI3K/AKT pathways. Promotes phosphorylation of GSK3B at 'Ser-9' and CTTN. Promotes epithelial cell spreading. This is Interleukin-22 (Il22) from Mus musculus (Mouse).